We begin with the raw amino-acid sequence, 260 residues long: Type III pantothenate kinase (260 aa).

6–13 (DVGNTNIT) is a binding site for ATP. 107–110 (GADR) contacts substrate. Residue Asp109 is the Proton acceptor of the active site. Asp129 contacts K(+). Thr132 serves as a coordination point for ATP. Thr184 contacts substrate.

It belongs to the type III pantothenate kinase family. As to quaternary structure, homodimer. Requires NH4(+) as cofactor. K(+) serves as cofactor.

Its subcellular location is the cytoplasm. The catalysed reaction is (R)-pantothenate + ATP = (R)-4'-phosphopantothenate + ADP + H(+). It functions in the pathway cofactor biosynthesis; coenzyme A biosynthesis; CoA from (R)-pantothenate: step 1/5. Catalyzes the phosphorylation of pantothenate (Pan), the first step in CoA biosynthesis. This is Type III pantothenate kinase from Agathobacter rectalis (strain ATCC 33656 / DSM 3377 / JCM 17463 / KCTC 5835 / VPI 0990) (Eubacterium rectale).